Here is a 306-residue protein sequence, read N- to C-terminus: Sulfate adenylyltransferase subunit 2 (306 aa).

Belongs to the PAPS reductase family. CysD subfamily. Heterodimer composed of CysD, the smaller subunit, and CysN.

It catalyses the reaction sulfate + ATP + H(+) = adenosine 5'-phosphosulfate + diphosphate. The protein operates within sulfur metabolism; hydrogen sulfide biosynthesis; sulfite from sulfate: step 1/3. Its function is as follows. With CysN forms the ATP sulfurylase (ATPS) that catalyzes the adenylation of sulfate producing adenosine 5'-phosphosulfate (APS) and diphosphate, the first enzymatic step in sulfur assimilation pathway. APS synthesis involves the formation of a high-energy phosphoric-sulfuric acid anhydride bond driven by GTP hydrolysis by CysN coupled to ATP hydrolysis by CysD. The chain is Sulfate adenylyltransferase subunit 2 from Brucella anthropi (strain ATCC 49188 / DSM 6882 / CCUG 24695 / JCM 21032 / LMG 3331 / NBRC 15819 / NCTC 12168 / Alc 37) (Ochrobactrum anthropi).